A 73-amino-acid chain; its full sequence is Gas vesicle protein M2 (73 aa).

The protein belongs to the gas vesicle GvpA family. GvpF to GvpM interact with each other in vitro, and may form multi-subunit complex(es). Might interact with GvpA.

The protein resides in the gas vesicle. Proteins GvpF to GvpM might be involved in nucleating gas vesicle formation. A minor component of the gas vesicle. Gas vesicles are hollow, gas filled proteinaceous nanostructures found in several microbial planktonic microorganisms. They allow positioning of halobacteria at the optimal depth for growth in the poorly aerated, shallow brine pools of their habitat. Functionally, expression of 2 c-vac DNA fragments containing 2 divergently transcribed regions (gvpE-gvpF-gvpG-gvpH-gvpI-gvpJ-gvpK-gvpL-gvpM and gvpA-gvpC-gvpN-gvpO) allows H.volcanii to produce gas vesicles. In Halobacterium salinarum (strain ATCC 700922 / JCM 11081 / NRC-1) (Halobacterium halobium), this protein is Gas vesicle protein M2.